The following is a 206-amino-acid chain: Large ribosomal subunit protein uL4 (206 aa).

A disordered region spans residues Asn43–Ser78. Basic and acidic residues predominate over residues Gly47 to Gly59. Residues Gly60–Gly71 show a composition bias toward basic residues.

This sequence belongs to the universal ribosomal protein uL4 family. Part of the 50S ribosomal subunit.

One of the primary rRNA binding proteins, this protein initially binds near the 5'-end of the 23S rRNA. It is important during the early stages of 50S assembly. It makes multiple contacts with different domains of the 23S rRNA in the assembled 50S subunit and ribosome. In terms of biological role, forms part of the polypeptide exit tunnel. This is Large ribosomal subunit protein uL4 from Desulforamulus reducens (strain ATCC BAA-1160 / DSM 100696 / MI-1) (Desulfotomaculum reducens).